The chain runs to 1037 residues: MDLNRIIQALKGTIDPKLRIAAENELNQSYKIINFAPSLLRIIVSDHVEFPVRQAAAIYLKNMVTQYWPDREPPPGEAIFPFNIHENDRQQIRDNIVEGIIRSPDLVRVQLTMCLRAIIKHDFPGHWPGVVDKIDYYLQSQSSASWLGSLLCLYQLVKTYEYKKAEEREPLIIAMQIFLPRIQQQIVQLLPDSSYYSVLLQKQILKIFYALVQYALPLQLVNNQTMTTWMEIFRTIIDRTVPPETLHIDEDDRPELVWWKCKKWALHIVARLFERYGSPGNVTKEYFEFSEFFLKTYAVGIQQVLLKILDQYRQKEYVAPRVLQQAFNYLNQGVVHSITWKQMKPHIQNISEDVIFSVMCYKDEDEELWQEDPYEYIRMKFDIFEDYASPTTAAQTLLYTAAKKRKEVLPKMMAFCYQILTDPNFDPRKKDGALHVIGSLAEILLKKSLFKDQMELFLQNHVFPLLLSNLGYLRARSCWVLHAFSSLKFHNELNLRNAVELAKKSLIEDKEMPVKVEAALALQSLISNQIQAKEYMKPHVRPIMQELLHIVRETENDDVTNVIQKMICEYSQEVASIAVDMTQHLAEIFGKVLQSDEYEEVEDKTVMAMGILHTIDTILTVVEDHKEITQQLENICLRIIDLVLQKHVIEFYEEILSLAYSLTCHSISPQMWQLLGILYEVFQQDCFEYFTDMMPLLHNYVTIDTDTLLSNAKHLEILFTMCRKVLCGDAGEDAECHAAKLLEVIILQCKGRGIDQCIPLFVQLVLERLTRGVKTSELRTMCLQVAIAALYYNPDLLLHTLERIQLPHNPGPITVQFINQWMNDTDCFLGHHDRKMCIIGLSILLELQNRPPAVDAVVGQIVPSILFLFLGLKQVCATRQLVNREDRSKAEKADMEENEEISSDEEETNVTAQAMQSNNGRGEDEEEEDDDWDEEVLEETALEGFSTPLDLDNSVDEYQFFTQALITVQSRDAAWYQLLMAPLSEDQRTALQEVYTLAEHRRTVAEAKKKIEQQGGFTFENKGVLSAFNFGTVPSNN.

Residues 22-102 form the Importin N-terminal domain; sequence AENELNQSYK…RDNIVEGIIR (81 aa). A compositionally biased stretch (basic and acidic residues) spans 886-895; that stretch reads DRSKAEKADM. The disordered stretch occupies residues 886–934; the sequence is DRSKAEKADMEENEEISSDEEETNVTAQAMQSNNGRGEDEEEEDDDWDE. Acidic residues predominate over residues 896-908; that stretch reads EENEEISSDEEET. 2 positions are modified to phosphoserine: serine 902 and serine 903. The segment covering 909 to 920 has biased composition (polar residues); it reads NVTAQAMQSNNG. Acidic residues predominate over residues 923–934; that stretch reads EDEEEEDDDWDE.

The protein belongs to the importin beta family. In terms of assembly, forms a heterodimer with KPNB1. Interacts with SRP19. Interacts with RPL23A. Binds directly to nuclear pore complexes. Interacts with LRPPRC; the interaction occurs when LRPPRC is in its RNA-free form and promotes import of LRPPRC to the nucleus to allow for EIF4E-mediated export of mRNAS from the nucleus to the cytoplasm.

The protein resides in the cytoplasm. Its subcellular location is the nucleus. Involved in nuclear protein import, either by acting as autonomous nuclear transport receptor or as an adapter-like protein in association with the importin-beta subunit KPNB1. Acting autonomously, may serve as receptor for nuclear localization signals (NLS) and promote translocation of import substrates through the nuclear pore complex (NPC) by an energy requiring, Ran-dependent mechanism. At the nucleoplasmic side of the NPC, Ran binds to importin, the importin/substrate complex dissociates and importin is re-exported from the nucleus to the cytoplasm where GTP hydrolysis releases Ran. The directionality of nuclear import is thought to be conferred by an asymmetric distribution of the GTP- and GDP-bound forms of Ran between the cytoplasm and nucleus. In vitro mediates the nuclear import of the signal recognition particle protein SRP19. May also be involved in cytoplasm-to-nucleus shuttling of a broad spectrum of other cargos, including Argonaute-microRNAs complexes, the JUN protein, RELA/NF-kappa-B p65 subunit, the translation initiation factor EIF4E and a set of receptor-activated mothers against decapentaplegic homolog (SMAD) transcription factors that play a critical role downstream of the large family of transforming growth factor beta and bone morphogenetic protein (BMP) cytokines. The chain is Importin-8 (IPO8) from Homo sapiens (Human).